The sequence spans 157 residues: Ribonuclease (157 aa).

The signal sequence occupies residues 1 to 34; it reads MMKMEGIALKKRLSWISVCLLVLVSAAGMLFSTA. Positions 35-47 are excised as a propeptide; that stretch reads AKTETSSHKAHTE. Catalysis depends on Glu120, which acts as the Proton acceptor. His149 serves as the catalytic Proton donor.

The protein belongs to the ribonuclease N1/T1 family.

Its subcellular location is the secreted. In terms of biological role, hydrolyzes phosphodiester bonds in RNA, poly- and oligoribonucleotides resulting in 3'-nucleoside monophosphates via 2',3'-cyclophosphate intermediates. The sequence is that of Ribonuclease from Bacillus amyloliquefaciens (Bacillus velezensis).